Here is a 444-residue protein sequence, read N- to C-terminus: Enolase (444 aa).

The substrate site is built by His163 and Glu172. The Proton donor role is filled by Glu215. Mg(2+) contacts are provided by Asp250, Glu300, and Asp327. Substrate contacts are provided by Glu300 and Asp327. The active-site Proton acceptor is the Lys352. Residues 379–382 (SHRS) and Lys403 contribute to the substrate site.

The protein belongs to the enolase family. As to quaternary structure, homodimer. Mg(2+) serves as cofactor.

It is found in the cytoplasm. It carries out the reaction (2R)-2-phosphoglycerate = phosphoenolpyruvate + H2O. It participates in carbohydrate degradation; glycolysis; pyruvate from D-glyceraldehyde 3-phosphate: step 4/5. This chain is Enolase (PGH1), found in Mesembryanthemum crystallinum (Common ice plant).